The sequence spans 67 residues: Large ribosomal subunit protein uL29 (67 aa).

It belongs to the universal ribosomal protein uL29 family.

The chain is Large ribosomal subunit protein uL29 from Cereibacter sphaeroides (strain ATCC 17025 / ATH 2.4.3) (Rhodobacter sphaeroides).